The primary structure comprises 627 residues: Chaperone protein DnaK (627 aa).

Phosphothreonine; by autocatalysis is present on T197. A compositionally biased stretch (polar residues) spans 602–611; that stretch reads ENQHSEANTV. The interval 602-627 is disordered; the sequence is ENQHSEANTVNDEKVVDADFQDVDKK. Positions 612–627 are enriched in basic and acidic residues; the sequence is NDEKVVDADFQDVDKK.

This sequence belongs to the heat shock protein 70 family.

Functionally, acts as a chaperone. This chain is Chaperone protein DnaK, found in Rickettsia felis (strain ATCC VR-1525 / URRWXCal2) (Rickettsia azadi).